A 206-amino-acid polypeptide reads, in one-letter code: MSANELTSGDFTESGEPFKLFAEWLGEAEASEPNDPNAVALATVDEDGLPNVRMVLLKGFDDNGFVFYTNFESQKGREILGQKKAAMCFHWKSLRRQVRLRGPVEIVTDAEADAYFKTRARGSRIGAWASKQSRPLESRFALEKAVAEYTARYAIGEIPRPAHWSGFRIRPTSIEFWKDQNFRLHDRIEFRRPLPEGAWDKVRMYP.

Residues 53-58 (RMVLLK), 68-69 (YT), K75, and Q97 contribute to the FMN site. Substrate is bound at residue K58. 3 residues coordinate substrate: Y115, R119, and S123. Residues 132 to 133 (QS) and W177 contribute to the FMN site. 183–185 (RLH) is a substrate binding site. Residue R187 coordinates FMN.

The protein belongs to the pyridoxamine 5'-phosphate oxidase family. As to quaternary structure, homodimer. Requires FMN as cofactor.

The catalysed reaction is pyridoxamine 5'-phosphate + O2 + H2O = pyridoxal 5'-phosphate + H2O2 + NH4(+). It carries out the reaction pyridoxine 5'-phosphate + O2 = pyridoxal 5'-phosphate + H2O2. The protein operates within cofactor metabolism; pyridoxal 5'-phosphate salvage; pyridoxal 5'-phosphate from pyridoxamine 5'-phosphate: step 1/1. It participates in cofactor metabolism; pyridoxal 5'-phosphate salvage; pyridoxal 5'-phosphate from pyridoxine 5'-phosphate: step 1/1. In terms of biological role, catalyzes the oxidation of either pyridoxine 5'-phosphate (PNP) or pyridoxamine 5'-phosphate (PMP) into pyridoxal 5'-phosphate (PLP). In Rhizobium leguminosarum bv. trifolii (strain WSM2304), this protein is Pyridoxine/pyridoxamine 5'-phosphate oxidase.